The sequence spans 173 residues: Bilin biosynthesis protein PecF (173 aa).

This sequence belongs to the CpcE/RpcE/PecE family.

In terms of biological role, an enzyme involved in the biosynthesis of bilin. The polypeptide is Bilin biosynthesis protein PecF (pecF) (Nostoc sp. (strain PCC 7120 / SAG 25.82 / UTEX 2576)).